Reading from the N-terminus, the 195-residue chain is Transmembrane protein 239 (195 aa).

The next 2 membrane-spanning stretches (helical) occupy residues 105 to 125 and 145 to 171; these read LWGLEGILYLLLALMLCHALF and HLLPALLLLVLSALPALLFTASFLLLF.

The protein localises to the membrane. This is Transmembrane protein 239 (TMEM239) from Homo sapiens (Human).